A 137-amino-acid chain; its full sequence is CDGSH iron-sulfur domain-containing protein 3, mitochondrial (137 aa).

At K65 the chain carries N6-acetyllysine; alternate. K65 carries the N6-succinyllysine; alternate modification. Residues C70, C72, C81, and H85 each contribute to the [2Fe-2S] cluster site. The residue at position 96 (K96) is an N6-acetyllysine. Residues C108, C110, C119, and H123 each contribute to the [2Fe-2S] cluster site. At K124 the chain carries N6-acetyllysine; alternate. Position 124 is an N6-succinyllysine; alternate (K124).

Belongs to the CISD protein family. As to quaternary structure, monomer. It depends on [2Fe-2S] cluster as a cofactor.

It localises to the mitochondrion. Its function is as follows. Can transfer its iron-sulfur clusters to the apoferrodoxins FDX1 and FDX2. Contributes to mitochondrial iron homeostasis and in maintaining normal levels of free iron and reactive oxygen species, and thereby contributes to normal mitochondrial function. The sequence is that of CDGSH iron-sulfur domain-containing protein 3, mitochondrial (Cisd3) from Mus musculus (Mouse).